Here is a 142-residue protein sequence, read N- to C-terminus: Maximins y/H11 (142 aa).

Positions 1–18 are cleaved as a signal peptide; it reads MNFKYIVAVSFLITSGYA. Positions 19–43 are excised as a propeptide; it reads ESVKNDEQSLSQRDVLEEESLREIR. Phenylalanine 68 is subject to Phenylalanine amide. Residues 72-121 constitute a propeptide that is removed on maturation; it reads SAEDHEVMKRLEAVIRDLDSLDHPEEASERETRGFNQEEIANLFTKKEKR. An Isoleucine amide modification is found at isoleucine 141.

It belongs to the bombinin family. In terms of tissue distribution, expressed by the skin glands.

The protein localises to the secreted. In terms of biological role, maximin-y shows antimicrobial activity against bacteria and against the fungus C.albicans. It has little hemolytic activity. Its function is as follows. Maximin-H11 shows antimicrobial activity against bacteria and against the fungus C.albicans. Shows strong hemolytic activity. The protein is Maximins y/H11 of Bombina maxima (Giant fire-bellied toad).